The primary structure comprises 505 residues: Hexose transporter 1 (505 aa).

Residues 1-27 lie on the Cytoplasmic side of the membrane; sequence MNILRMDILSRGGTQEIEHRDGFFNTS. Residues 28 to 48 traverse the membrane as a helical segment; it reads FQYVLSACLASFIFGYQVSVL. The Extracellular portion of the chain corresponds to 49–78; the sequence is NTIKSYIVVEFEWCSTKTDTSCEDSILKSS. A disulfide bridge connects residues Cys-62 and Cys-70. A helical membrane pass occupies residues 79–99; the sequence is FLLASVFIGAVLGSGFSGYLV. Over 100 to 104 the chain is Cytoplasmic; sequence KFGRR. Residues 105–125 form a helical membrane-spanning segment; the sequence is FSLMVIYIFFIFVSILTAISH. Residues 126 to 134 lie on the Extracellular side of the membrane; the sequence is HFHTILYAR. Residues 135 to 155 form a helical membrane-spanning segment; the sequence is LLSGFGIGLITVSVPMYISEM. Residues 156 to 165 are Cytoplasmic-facing; that stretch reads THKDKKGAYG. A helical transmembrane segment spans residues 166 to 186; that stretch reads VLHQLFITFGIFVAVLLGLFL. Gln-169 lines the alpha-D-glucose pocket. Gln-169 serves as a coordination point for beta-D-glucose. The Extracellular segment spans residues 187-208; sequence GDGPKINGKSIELSNFEMFWWR. Residues 209–229 form a helical membrane-spanning segment; that stretch reads FMFFLPTIISLLGIILLIAFY. The Cytoplasmic portion of the chain corresponds to 230–294; that stretch reads KEETPYFLYE…SALKIPAYRN (65 aa). A helical transmembrane segment spans residues 295–315; that stretch reads VIILGCILSGFQQFTGINVLV. Alpha-D-glucose contacts are provided by Gln-306, Gln-307, and Asn-312. Gln-306 serves as a coordination point for beta-D-glucose. Asn-312 provides a ligand contact to beta-D-glucose. Residues 316–332 are Extracellular-facing; that stretch reads ANSNELYKEFLDKNLIT. A helical transmembrane segment spans residues 333–353; sequence ILSVIMTAVNFLMTFPAIYII. Residue Asn-342 coordinates beta-D-glucose. At 354–358 the chain is on the cytoplasmic side; it reads EKIGR. Residues 359–379 form a helical membrane-spanning segment; sequence KTLLLGGCIGVICAFLPTVIA. Residues 380-393 are Extracellular-facing; sequence RQVWGPTKIVNGLS. The helical transmembrane segment at 394–414 threads the bilayer; sequence IAGTFLMIISFAVSYGPVLWI. Trp-413 is an alpha-D-glucose binding site. The Cytoplasmic segment spans residues 415-430; that stretch reads YLHEMYPSEIKDSAAS. A helical transmembrane segment spans residues 431-451; that stretch reads LASLINWVCAIIVVFPSDIII. Over 452–456 the chain is Extracellular; sequence KKSPS. A helical membrane pass occupies residues 457-477; the sequence is ILFMFFSVMCIIAFLFIMFFI. At 478–505 the chain is on the cytoplasmic side; the sequence is KETKGGEIGTSPYISLEERQKHIGKSKV.

This sequence belongs to the major facilitator superfamily. Sugar transporter (TC 2.A.1.1) family. As to quaternary structure, homodimer.

It localises to the cell membrane. It catalyses the reaction D-glucose(out) = D-glucose(in). The catalysed reaction is D-fructose(out) = D-fructose(in). It carries out the reaction D-galactose(in) = D-galactose(out). The enzyme catalyses D-mannose(out) = D-mannose(in). It catalyses the reaction D-glucosamine(out) = D-glucosamine(in). The catalysed reaction is D-xylose(out) = D-xylose(in). Its activity is regulated as follows. Inhibited by cytochalasin B. Sodium-independent facilitative hexose transporter. Can transport D-glucose and D-fructose. Can transport D-mannose, D-galactose, D-xylose and D-glucosamine. In Plasmodium yoelii yoelii, this protein is Hexose transporter 1.